We begin with the raw amino-acid sequence, 444 residues long: N-succinylarginine dihydrolase (444 aa).

Residues 19–28, Asn-110, and 137–138 each bind substrate; these read AGLSFGNVAS and HR. Glu-174 is a catalytic residue. Arg-214 serves as a coordination point for substrate. His-250 is a catalytic residue. 2 residues coordinate substrate: Asp-252 and Asn-362. Cys-368 functions as the Nucleophile in the catalytic mechanism.

The protein belongs to the succinylarginine dihydrolase family. Homodimer.

The enzyme catalyses N(2)-succinyl-L-arginine + 2 H2O + 2 H(+) = N(2)-succinyl-L-ornithine + 2 NH4(+) + CO2. It functions in the pathway amino-acid degradation; L-arginine degradation via AST pathway; L-glutamate and succinate from L-arginine: step 2/5. Catalyzes the hydrolysis of N(2)-succinylarginine into N(2)-succinylornithine, ammonia and CO(2). The sequence is that of N-succinylarginine dihydrolase from Shewanella putrefaciens (strain CN-32 / ATCC BAA-453).